Reading from the N-terminus, the 160-residue chain is SsrA-binding protein (160 aa).

It belongs to the SmpB family.

It localises to the cytoplasm. Its function is as follows. Required for rescue of stalled ribosomes mediated by trans-translation. Binds to transfer-messenger RNA (tmRNA), required for stable association of tmRNA with ribosomes. tmRNA and SmpB together mimic tRNA shape, replacing the anticodon stem-loop with SmpB. tmRNA is encoded by the ssrA gene; the 2 termini fold to resemble tRNA(Ala) and it encodes a 'tag peptide', a short internal open reading frame. During trans-translation Ala-aminoacylated tmRNA acts like a tRNA, entering the A-site of stalled ribosomes, displacing the stalled mRNA. The ribosome then switches to translate the ORF on the tmRNA; the nascent peptide is terminated with the 'tag peptide' encoded by the tmRNA and targeted for degradation. The ribosome is freed to recommence translation, which seems to be the essential function of trans-translation. This Escherichia coli O6:K15:H31 (strain 536 / UPEC) protein is SsrA-binding protein.